Here is a 785-residue protein sequence, read N- to C-terminus: Ubiquitin carboxyl-terminal hydrolase 1 (785 aa).

Disordered regions lie at residues 1–21 and 33–52; these read MPGV…SKKN and TKRA…ASEY. Polar residues predominate over residues 7 to 16; that stretch reads SESNGLSRGS. Phosphoserine occurs at positions 16, 42, and 67. The USP domain occupies 81 to 785; the sequence is VGLNNLGNTC…TPYLLFYKKL (705 aa). Cysteine 90 (nucleophile) is an active-site residue. Basic and acidic residues-rich tracts occupy residues 258–275 and 286–298; these read EDFK…KSDT and LSKE…ENQR. Residues 258 to 336 form a disordered region; the sequence is EDFKEKLPKG…SPRPSQKKSR (79 aa). Serine 313 and serine 475 each carry phosphoserine. Histidine 593 (proton acceptor) is an active-site residue. A disordered region spans residues 693 to 723; that stretch reads TAFAENRNSETSDTTGTHESDRNKESSDQTG. Over residues 708-719 the composition is skewed to basic and acidic residues; it reads GTHESDRNKESS. A Phosphoserine modification is found at serine 768.

Belongs to the peptidase C19 family. In terms of assembly, interacts with FANCD2 and PCNA. Interacts with WDR48. Interacts with ATAD5; the interaction regulates USP1-mediated PCNA deubiquitination. Autocatalytic cleavage of USP1 following UV irradiation inactivates it, leading to an increase in ubiquitinated PCNA, recruitment of POLH and translesion synthesis. In terms of processing, ubiquitinated by the CRL2(KLHDC2) complex following autocatalytic cleavage, leading to its degradation: the CRL2(KLHDC2) complex recognizes the diglycine (Gly-Gly) at the C-terminus.

Its subcellular location is the nucleus. The enzyme catalyses Thiol-dependent hydrolysis of ester, thioester, amide, peptide and isopeptide bonds formed by the C-terminal Gly of ubiquitin (a 76-residue protein attached to proteins as an intracellular targeting signal).. In terms of biological role, negative regulator of DNA damage repair which specifically deubiquitinates monoubiquitinated FANCD2. Also involved in PCNA-mediated translesion synthesis (TLS) by deubiquitinating monoubiquitinated PCNA. Has almost no deubiquitinating activity by itself and requires the interaction with WDR48 to have a high activity. In Homo sapiens (Human), this protein is Ubiquitin carboxyl-terminal hydrolase 1 (USP1).